Consider the following 230-residue polypeptide: UPF0173 metal-dependent hydrolase Rsph17025_2229 (230 aa).

The protein belongs to the UPF0173 family.

The protein is UPF0173 metal-dependent hydrolase Rsph17025_2229 of Cereibacter sphaeroides (strain ATCC 17025 / ATH 2.4.3) (Rhodobacter sphaeroides).